The chain runs to 290 residues: Pre-mRNA-splicing factor cwf20 (290 aa).

Disordered regions lie at residues 1–61 (MSLV…KSSF) and 114–134 (PNNSVSDLTSTGSSETVKKST). Residues 114–128 (PNNSVSDLTSTGSSE) are compositionally biased toward polar residues.

Belongs to the 40S cdc5-associated complex (or cwf complex), a spliceosome sub-complex reminiscent of a late-stage spliceosome composed of the U2, U5 and U6 snRNAs and at least brr2, cdc5, cwf2/prp3, cwf3/syf1, cwf4/syf3, cwf5/ecm2, spp42/cwf6, cwf7/spf27, cwf8, cwf9, cwf10, cwf11, cwf12, prp45/cwf13, cwf14, cwf15, cwf16, cwf17, cwf18, cwf19, cwf20, cwf21, cwf22, cwf23, cwf24, cwf25, cwf26, cyp7/cwf27, cwf28, cwf29/ist3, lea1, msl1, prp5/cwf1, prp10, prp12/sap130, prp17, prp22, sap61, sap62, sap114, sap145, slu7, smb1, smd1, smd3, smf1, smg1 and syf2.

It localises to the nucleus. Its function is as follows. Involved in mRNA splicing where it associates with cdc5 and the other cwf proteins as part of the spliceosome. This Schizosaccharomyces pombe (strain 972 / ATCC 24843) (Fission yeast) protein is Pre-mRNA-splicing factor cwf20 (cwf20).